Consider the following 301-residue polypeptide: uncharacterized protein (301 aa).

Residues 1–21 (MKIKLILVLIVFLTIVNVNNS) form the signal peptide. Residues Asn-19, Asn-59, Asn-102, and Asn-180 are each glycosylated (N-linked (GlcNAc...) asparagine).

It localises to the secreted. This is an uncharacterized protein from Dictyostelium discoideum (Social amoeba).